We begin with the raw amino-acid sequence, 736 residues long: Replication restart protein PriA (736 aa).

The Helicase ATP-binding domain maps to 230-396; the sequence is DFKGNISKEN…KEGRIRTFNF (167 aa). 243 to 250 contacts ATP; that stretch reads GPTGSGKT. Positions 339 to 342 match the DEAH box motif; sequence DEEH. 8 residues coordinate Zn(2+): Cys452, Cys455, Cys461, Cys464, Cys479, Cys482, Cys492, and Cys495. Positions 487–643 constitute a Helicase C-terminal domain; sequence GLVESCPRCG…EELERRKALG (157 aa).

This sequence belongs to the helicase family. PriA subfamily. Component of the replication restart primosome. Zn(2+) serves as cofactor.

It catalyses the reaction Couples ATP hydrolysis with the unwinding of duplex DNA by translocating in the 3'-5' direction.. The catalysed reaction is ATP + H2O = ADP + phosphate + H(+). Functionally, initiates the restart of stalled replication forks, which reloads the replicative helicase on sites other than the origin of replication. Recognizes and binds to abandoned replication forks and remodels them to uncover a helicase loading site. Promotes assembly of the primosome at these replication forks. In Thermotoga maritima (strain ATCC 43589 / DSM 3109 / JCM 10099 / NBRC 100826 / MSB8), this protein is Replication restart protein PriA.